We begin with the raw amino-acid sequence, 163 residues long: Epithelial membrane protein 3 (163 aa).

Residues 4–24 (LLLVVSALHILILVLLFVATL) form a helical membrane-spanning segment. Residues N46 and N56 are each glycosylated (N-linked (GlcNAc...) asparagine). Transmembrane regions (helical) follow at residues 66-86 (VQAL…LFMI), 100-120 (TGLC…IYAI), and 139-159 (FALA…YIHL).

Belongs to the PMP-22/EMP/MP20 family.

It localises to the membrane. Its function is as follows. Probably involved in cell proliferation and cell-cell interactions. This is Epithelial membrane protein 3 (Emp3) from Rattus norvegicus (Rat).